The sequence spans 115 residues: Large ribosomal subunit protein bL19 (115 aa).

Belongs to the bacterial ribosomal protein bL19 family.

In terms of biological role, this protein is located at the 30S-50S ribosomal subunit interface and may play a role in the structure and function of the aminoacyl-tRNA binding site. This chain is Large ribosomal subunit protein bL19, found in Buchnera aphidicola subsp. Acyrthosiphon pisum (strain 5A).